Here is a 296-residue protein sequence, read N- to C-terminus: Aspartate carbamoyltransferase catalytic subunit (296 aa).

Residues Arg-50 and Thr-51 each coordinate carbamoyl phosphate. An L-aspartate-binding site is contributed by Lys-79. Carbamoyl phosphate contacts are provided by Arg-100, His-128, and Gln-131. L-aspartate contacts are provided by Arg-161 and Arg-219. Leu-258 and Pro-259 together coordinate carbamoyl phosphate.

The protein belongs to the aspartate/ornithine carbamoyltransferase superfamily. ATCase family. Heterooligomer of catalytic and regulatory chains.

It carries out the reaction carbamoyl phosphate + L-aspartate = N-carbamoyl-L-aspartate + phosphate + H(+). Its pathway is pyrimidine metabolism; UMP biosynthesis via de novo pathway; (S)-dihydroorotate from bicarbonate: step 2/3. Its function is as follows. Catalyzes the condensation of carbamoyl phosphate and aspartate to form carbamoyl aspartate and inorganic phosphate, the committed step in the de novo pyrimidine nucleotide biosynthesis pathway. The chain is Aspartate carbamoyltransferase catalytic subunit from Korarchaeum cryptofilum (strain OPF8).